Consider the following 294-residue polypeptide: Ribosomal RNA small subunit methyltransferase A (294 aa).

Residues N31, L33, G58, E79, D111, and N136 each contribute to the S-adenosyl-L-methionine site.

Belongs to the class I-like SAM-binding methyltransferase superfamily. rRNA adenine N(6)-methyltransferase family. RsmA subfamily.

It is found in the cytoplasm. It carries out the reaction adenosine(1518)/adenosine(1519) in 16S rRNA + 4 S-adenosyl-L-methionine = N(6)-dimethyladenosine(1518)/N(6)-dimethyladenosine(1519) in 16S rRNA + 4 S-adenosyl-L-homocysteine + 4 H(+). Specifically dimethylates two adjacent adenosines (A1518 and A1519) in the loop of a conserved hairpin near the 3'-end of 16S rRNA in the 30S particle. May play a critical role in biogenesis of 30S subunits. The polypeptide is Ribosomal RNA small subunit methyltransferase A (Lactobacillus helveticus (strain DPC 4571)).